The following is a 122-amino-acid chain: Small ribosomal subunit protein uS13 (122 aa).

The tract at residues serine 95–lysine 122 is disordered. The span at arginine 108–lysine 122 shows a compositional bias: basic residues.

The protein belongs to the universal ribosomal protein uS13 family. In terms of assembly, part of the 30S ribosomal subunit. Forms a loose heterodimer with protein S19. Forms two bridges to the 50S subunit in the 70S ribosome.

Functionally, located at the top of the head of the 30S subunit, it contacts several helices of the 16S rRNA. In the 70S ribosome it contacts the 23S rRNA (bridge B1a) and protein L5 of the 50S subunit (bridge B1b), connecting the 2 subunits; these bridges are implicated in subunit movement. Contacts the tRNAs in the A and P-sites. The protein is Small ribosomal subunit protein uS13 of Desulforapulum autotrophicum (strain ATCC 43914 / DSM 3382 / VKM B-1955 / HRM2) (Desulfobacterium autotrophicum).